Consider the following 270-residue polypeptide: Formamidopyrimidine-DNA glycosylase (270 aa).

Pro-2 (schiff-base intermediate with DNA) is an active-site residue. Catalysis depends on Glu-3, which acts as the Proton donor. The active-site Proton donor; for beta-elimination activity is the Lys-58. DNA is bound by residues His-90, Arg-109, and Arg-152. Residues 237–270 form an FPG-type zinc finger; the sequence is RVYGREGEACECGGAIVRVVQSGRSTFYCRKCQR. The active-site Proton donor; for delta-elimination activity is Arg-260.

Belongs to the FPG family. As to quaternary structure, monomer. The cofactor is Zn(2+).

The catalysed reaction is Hydrolysis of DNA containing ring-opened 7-methylguanine residues, releasing 2,6-diamino-4-hydroxy-5-(N-methyl)formamidopyrimidine.. It carries out the reaction 2'-deoxyribonucleotide-(2'-deoxyribose 5'-phosphate)-2'-deoxyribonucleotide-DNA = a 3'-end 2'-deoxyribonucleotide-(2,3-dehydro-2,3-deoxyribose 5'-phosphate)-DNA + a 5'-end 5'-phospho-2'-deoxyribonucleoside-DNA + H(+). In terms of biological role, involved in base excision repair of DNA damaged by oxidation or by mutagenic agents. Acts as a DNA glycosylase that recognizes and removes damaged bases. Has a preference for oxidized purines, such as 7,8-dihydro-8-oxoguanine (8-oxoG). Has AP (apurinic/apyrimidinic) lyase activity and introduces nicks in the DNA strand. Cleaves the DNA backbone by beta-delta elimination to generate a single-strand break at the site of the removed base with both 3'- and 5'-phosphates. This is Formamidopyrimidine-DNA glycosylase from Sphingopyxis alaskensis (strain DSM 13593 / LMG 18877 / RB2256) (Sphingomonas alaskensis).